The following is a 201-amino-acid chain: Holliday junction branch migration complex subunit RuvA (201 aa).

The domain I stretch occupies residues 1 to 63 (MYDYIKGTVT…EDNISLFGFQ (63 aa)). A domain II region spans residues 64–142 (TTEERYLFKK…DVVASEIVYV (79 aa)). Residues 143–153 (APENDMVAGLS) are flexible linker. Residues 153-201 (SPQLEEAVLALEALGYSTRELKKVIPKLSKEEDLTSDAYIKLALQLMTK) form a domain III region.

Belongs to the RuvA family. In terms of assembly, homotetramer. Forms an RuvA(8)-RuvB(12)-Holliday junction (HJ) complex. HJ DNA is sandwiched between 2 RuvA tetramers; dsDNA enters through RuvA and exits via RuvB. An RuvB hexamer assembles on each DNA strand where it exits the tetramer. Each RuvB hexamer is contacted by two RuvA subunits (via domain III) on 2 adjacent RuvB subunits; this complex drives branch migration. In the full resolvosome a probable DNA-RuvA(4)-RuvB(12)-RuvC(2) complex forms which resolves the HJ.

The protein localises to the cytoplasm. Functionally, the RuvA-RuvB-RuvC complex processes Holliday junction (HJ) DNA during genetic recombination and DNA repair, while the RuvA-RuvB complex plays an important role in the rescue of blocked DNA replication forks via replication fork reversal (RFR). RuvA specifically binds to HJ cruciform DNA, conferring on it an open structure. The RuvB hexamer acts as an ATP-dependent pump, pulling dsDNA into and through the RuvAB complex. HJ branch migration allows RuvC to scan DNA until it finds its consensus sequence, where it cleaves and resolves the cruciform DNA. The chain is Holliday junction branch migration complex subunit RuvA from Listeria monocytogenes serotype 4b (strain CLIP80459).